Consider the following 305-residue polypeptide: tRNA dimethylallyltransferase (305 aa).

11-18 (GPTAVGKT) serves as a coordination point for ATP. Residue 13–18 (TAVGKT) participates in substrate binding. Residues 36-39 (DSMQ) are interaction with substrate tRNA.

This sequence belongs to the IPP transferase family. As to quaternary structure, monomer. The cofactor is Mg(2+).

The catalysed reaction is adenosine(37) in tRNA + dimethylallyl diphosphate = N(6)-dimethylallyladenosine(37) in tRNA + diphosphate. Catalyzes the transfer of a dimethylallyl group onto the adenine at position 37 in tRNAs that read codons beginning with uridine, leading to the formation of N6-(dimethylallyl)adenosine (i(6)A). This is tRNA dimethylallyltransferase from Listeria monocytogenes serotype 4a (strain HCC23).